Reading from the N-terminus, the 301-residue chain is 5'-adenylylsulfate reductase-like 5 (301 aa).

Residues 1–21 (MTRCAVVAAVAAVLLVAGAAA) form the signal peptide. Residues 51-164 (CIRIEPSPPV…LVDFYKETTG (114 aa)) enclose the Thioredoxin domain. N-linked (GlcNAc...) asparagine glycosylation is present at Asn-139. The chain crosses the membrane as a helical span at residues 201–221 (FVLLAVLFIILKVAAHFVPIV). Asn-268 is a glycosylation site (N-linked (GlcNAc...) asparagine).

Its subcellular location is the membrane. The sequence is that of 5'-adenylylsulfate reductase-like 5 (APRL5) from Oryza sativa subsp. japonica (Rice).